The sequence spans 249 residues: Probable transcriptional regulatory protein ERGA_CDS_03720 (249 aa).

The disordered stretch occupies residues 1-21; the sequence is MAGHSQFANIKHRKGAQDAKR.

This sequence belongs to the TACO1 family.

It localises to the cytoplasm. The protein is Probable transcriptional regulatory protein ERGA_CDS_03720 of Ehrlichia ruminantium (strain Gardel).